The sequence spans 157 residues: Tuberoinfundibular peptide of 39 residues (157 aa).

The N-terminal stretch at 1–25 is a signal peptide; it reads MALSLPPRPALLFLVLMSVTLMASA. A propeptide spanning residues 26 to 116 is cleaved from the precursor; the sequence is FPQPQLRPLQ…DWPSRVGHQQ (91 aa).

It belongs to the parathyroid hormone family.

The protein localises to the secreted. In terms of biological role, plays a role as a potent and selective agonist of pth2r resulting in adenyl cyclase activation and intracellular calcium level elevation. This Danio rerio (Zebrafish) protein is Tuberoinfundibular peptide of 39 residues.